Consider the following 189-residue polypeptide: Cell division protein SepF (189 aa).

The disordered stretch occupies residues Glu18–Asp64. The segment covering His22–Lys35 has biased composition (basic and acidic residues).

This sequence belongs to the SepF family. As to quaternary structure, homodimer. Interacts with FtsZ.

It is found in the cytoplasm. Functionally, cell division protein that is part of the divisome complex and is recruited early to the Z-ring. Probably stimulates Z-ring formation, perhaps through the cross-linking of FtsZ protofilaments. Its function overlaps with FtsA. The protein is Cell division protein SepF of Streptococcus thermophilus (strain ATCC BAA-250 / LMG 18311).